Consider the following 101-residue polypeptide: Small ribosomal subunit protein uS10 (101 aa).

It belongs to the universal ribosomal protein uS10 family. In terms of assembly, part of the 30S ribosomal subunit.

Functionally, involved in the binding of tRNA to the ribosomes. The protein is Small ribosomal subunit protein uS10 of Ureaplasma parvum serovar 3 (strain ATCC 27815 / 27 / NCTC 11736).